Here is a 348-residue protein sequence, read N- to C-terminus: S-adenosylmethionine:tRNA ribosyltransferase-isomerase (348 aa).

This sequence belongs to the QueA family. As to quaternary structure, monomer.

Its subcellular location is the cytoplasm. It carries out the reaction 7-aminomethyl-7-carbaguanosine(34) in tRNA + S-adenosyl-L-methionine = epoxyqueuosine(34) in tRNA + adenine + L-methionine + 2 H(+). The protein operates within tRNA modification; tRNA-queuosine biosynthesis. In terms of biological role, transfers and isomerizes the ribose moiety from AdoMet to the 7-aminomethyl group of 7-deazaguanine (preQ1-tRNA) to give epoxyqueuosine (oQ-tRNA). In Alteromonas mediterranea (strain DSM 17117 / CIP 110805 / LMG 28347 / Deep ecotype), this protein is S-adenosylmethionine:tRNA ribosyltransferase-isomerase.